Consider the following 55-residue polypeptide: Conotoxin vc5b (55 aa).

Positions 1-15 (VILLLLIASAPSVDA) are cleaved as a signal peptide. A propeptide spanning residues 16–41 (QPKTKDDVPLAPLHDNAKSALQHLNQ) is cleaved from the precursor. The residue at position 53 (Gln-53) is a Glutamine amide.

Contains 2 disulfide bonds that can be either 'C1-C3, C2-C4' or 'C1-C4, C2-C3', since these disulfide connectivities have been observed for conotoxins with cysteine framework V (for examples, see AC P0DQQ7 and AC P81755). In terms of tissue distribution, expressed by the venom duct.

It is found in the secreted. In Conus victoriae (Queen Victoria cone), this protein is Conotoxin vc5b.